Reading from the N-terminus, the 842-residue chain is Protein P (842 aa).

A terminal protein domain (TP) region spans residues 1-177; the sequence is MPLSYQHFRR…FCGSPYSWEQ (177 aa). Positions 178–345 are spacer; the sequence is ELHHGAFLDG…YCLTHLVNLL (168 aa). Positions 186 to 273 are disordered; sequence DGPSRMGEES…AKNIASRSAS (88 aa). Over residues 223–239 the composition is skewed to polar residues; it reads GPQSQQRPLDGSQQGRS. Residues 346-689 are polymerase/reverse transcriptase domain (RT); the sequence is EDWGPCTEHG…YLNLYPVARQ (344 aa). One can recognise a Reverse transcriptase domain in the interval 356-599; that stretch reads RHHIRIPRTP…YSLNFMGYVI (244 aa). Residues D428, D550, and D551 each coordinate Mg(2+).

The protein belongs to the hepadnaviridae P protein family.

The enzyme catalyses DNA(n) + a 2'-deoxyribonucleoside 5'-triphosphate = DNA(n+1) + diphosphate. It carries out the reaction Endonucleolytic cleavage to 5'-phosphomonoester.. With respect to regulation, activated by host HSP70 and HSP40 in vitro to be able to bind the epsilon loop of the pgRNA. Because deletion of the RNase H region renders the protein partly chaperone-independent, the chaperones may be needed indirectly to relieve occlusion of the RNA-binding site by this domain. Inhibited by several reverse-transcriptase inhibitors: Lamivudine, Adefovir and Entecavir. In terms of biological role, multifunctional enzyme that converts the viral RNA genome into dsDNA in viral cytoplasmic capsids. This enzyme displays a DNA polymerase activity that can copy either DNA or RNA templates, and a ribonuclease H (RNase H) activity that cleaves the RNA strand of RNA-DNA heteroduplexes in a partially processive 3'- to 5'-endonucleasic mode. Neo-synthesized pregenomic RNA (pgRNA) are encapsidated together with the P protein, and reverse-transcribed inside the nucleocapsid. Initiation of reverse-transcription occurs first by binding the epsilon loop on the pgRNA genome, and is initiated by protein priming, thereby the 5'-end of (-)DNA is covalently linked to P protein. Partial (+)DNA is synthesized from the (-)DNA template and generates the relaxed circular DNA (RC-DNA) genome. After budding and infection, the RC-DNA migrates in the nucleus, and is converted into a plasmid-like covalently closed circular DNA (cccDNA). The activity of P protein does not seem to be necessary for cccDNA generation, and is presumably released from (+)DNA by host nuclear DNA repair machinery. This chain is Protein P, found in Homo sapiens (Human).